Consider the following 127-residue polypeptide: Peroxiredoxin-2 (127 aa).

The Thioredoxin domain maps to 1–125 (LFFYPLDFTF…ALRLVQGXQY (125 aa)). The active-site Cysteine sulfenic acid (-SOH) intermediate is the Cys12. Position 73 is a phosphoserine (Ser73).

This sequence belongs to the peroxiredoxin family. AhpC/Prx1 subfamily. As to quaternary structure, homodimer; disulfide-linked, upon oxidation. 5 homodimers assemble to form a ring-like decamer. Interacts with TIPIN. The enzyme can be inactivated by further oxidation of the cysteine sulfenic acid (C(P)-SOH) to sulphinic acid (C(P)-SO2H) instead of its condensation to a disulfide bond. It can be reactivated by forming a transient disulfide bond with sulfiredoxin SRXN1, which reduces the cysteine sulfinic acid in an ATP- and Mg-dependent manner. Post-translationally, acetylation increases resistance to transition to high molecular-mass complexes. Deacetylated by HDAC6 which decreases reducing activity.

It is found in the cytoplasm. The catalysed reaction is a hydroperoxide + [thioredoxin]-dithiol = an alcohol + [thioredoxin]-disulfide + H2O. Thiol-specific peroxidase that catalyzes the reduction of hydrogen peroxide and organic hydroperoxides to water and alcohols, respectively. Plays a role in cell protection against oxidative stress by detoxifying peroxides and as sensor of hydrogen peroxide-mediated signaling events. Might participate in the signaling cascades of growth factors and tumor necrosis factor-alpha by regulating the intracellular concentrations of H(2)O(2). The protein is Peroxiredoxin-2 (PRDX2) of Sus scrofa (Pig).